The primary structure comprises 500 residues: Vitamin D(3) 25-hydroxylase (500 aa).

Position 446 (C446) interacts with heme.

This sequence belongs to the cytochrome P450 family. Heme serves as cofactor. In terms of tissue distribution, found in liver and kidney.

Its subcellular location is the endoplasmic reticulum membrane. It is found in the microsome membrane. It carries out the reaction calciol + reduced [NADPH--hemoprotein reductase] + O2 = calcidiol + oxidized [NADPH--hemoprotein reductase] + H2O + H(+). The enzyme catalyses alfacalcidol + reduced [NADPH--hemoprotein reductase] + O2 = calcitriol + oxidized [NADPH--hemoprotein reductase] + H2O + H(+). The catalysed reaction is dodecanoate + reduced [NADPH--hemoprotein reductase] + O2 = 12-hydroxydodecanoate + oxidized [NADPH--hemoprotein reductase] + H2O + H(+). It catalyses the reaction dodecanoate + reduced [NADPH--hemoprotein reductase] + O2 = 11-hydroxydodecanoate + oxidized [NADPH--hemoprotein reductase] + H2O + H(+). It carries out the reaction 5beta-cholestane-3alpha,7alpha-diol + reduced [NADPH--hemoprotein reductase] + O2 = 5beta-cholestane-3alpha,7alpha,25-triol + oxidized [NADPH--hemoprotein reductase] + H2O + H(+). The enzyme catalyses 5beta-cholestane-3alpha,7alpha,12alpha-triol + reduced [NADPH--hemoprotein reductase] + O2 = 5beta-cholestane-3alpha,7alpha,12alpha,25-tetrol + oxidized [NADPH--hemoprotein reductase] + H2O + H(+). Its function is as follows. Catalyzes the 25-hydroxylation of vitamin D(3) (calciol), 1alpha-hydroxyvitamin D(3) (alphacalcidiol) and some C27 steroids. In addition the enzyme catalyzes the hydroxylation of positions 11 and 12 of dodecanoate. The chain is Vitamin D(3) 25-hydroxylase (CYP2D25) from Sus scrofa (Pig).